The chain runs to 635 residues: MEFGSTEDGRHDKFPVGMRVLAVDDNPTCLRKLEELLLRCKYHVTKTMESRKALEMLRENSNMFDLVISDVEMPDTDGFKLLEIGLEMDLPVIMLSAHSDYDSVMKGIIHGACDYLVKPVGLKELQNIWHHVVKKNIKSYAKLLPPSESDSVPSASRKRKDKVNDSGDEDDSDREEDDGEGSEQDGDGSGTRKKPRVVWSQELHQKFVSAVQQLGLDKAVPKKILDLMSIEGLTRENVASHLQKYRLYLKKIDEGQQQNMTPDAFGTRDSSYFQMAQLDGLRDFTAARQIPSSGLLSRSHLTKLQPPMYSSINLQGMNSSSFIQQGHHQNSSNSANPFGTYHSTLSPRIQNVNLFQRTSSPLEPLQFPRSKSYIGDFKGLGDRAIGGSFLDTCMPFGSSSTSLPSASTNPLMLQANYTQPLHIASDGIQPCIEGTPSNSASPNISFQGLSRFPGHSWQGNLNTTRFPPSSLPLNLAFLPDQVTCAGNNLGDCTSLVSAENPGGEMQCDPQLLGGFMQNVNPLGGQKWEQQNCTMLNNPFGNIEYPLPADNMVFRDNNSTRSKGLDESLMNPIDNSQEYVGKATTMLDPEMKSGKPENDNQHDVFDDIMNEMMKQEENNGMVPVATRFGFDSFPPP.

The 115-residue stretch at 19 to 133 (RVLAVDDNPT…ELQNIWHHVV (115 aa)) folds into the Response regulatory domain. Asp70 is subject to 4-aspartylphosphate. Disordered stretches follow at residues 144–196 (LPPS…KKPR) and 323–342 (IQQG…GTYH). Acidic residues predominate over residues 166–186 (SGDEDDSDREEDDGEGSEQDG). The Nuclear localization signal signature appears at 193-196 (KKPR). Positions 196 to 246 (RVVWSQELHQKFVSAVQQLGLDKAVPKKILDLMSIEGLTRENVASHLQKYR) form a DNA-binding region, myb-like GARP.

This sequence belongs to the ARR family. Type-B subfamily. As to quaternary structure, binds the target DNA as a monomer. In terms of processing, two-component system major event consists of a His-to-Asp phosphorelay between a sensor histidine kinase (HK) and a response regulator (RR). In plants, the His-to-Asp phosphorelay involves an additional intermediate named Histidine-containing phosphotransfer protein (HPt). This multistep phosphorelay consists of a His-Asp-His-Asp sequential transfer of a phosphate group between first a His and an Asp of the HK protein, followed by the transfer to a conserved His of the HPt protein and finally the transfer to an Asp in the receiver domain of the RR protein. As to expression, predominantly expressed in young leaf tissue developing anthers, and siliques.

It is found in the nucleus. Transcriptional activator that binds specifically to the DNA sequence 5'-[AG]GATT-3'. Functions as a response regulator involved in His-to-Asp phosphorelay signal transduction system. Phosphorylation of the Asp residue in the receiver domain activates the ability of the protein to promote the transcription of target genes. Could directly activate some type-A response regulators in response to cytokinins. This Arabidopsis thaliana (Mouse-ear cress) protein is Two-component response regulator ARR18 (ARR18).